Consider the following 451-residue polypeptide: uncharacterized protein (451 aa).

The region spanning 29-204 (LERYPDIIVF…TSMTFKAVPI (176 aa)) is the FAD-binding PCMH-type domain. The residue at position 66 (His-66) is a Pros-8alpha-FAD histidine.

The protein belongs to the oxygen-dependent FAD-linked oxidoreductase family. FAD serves as cofactor.

This is an uncharacterized protein from Bacillus subtilis (strain 168).